Consider the following 409-residue polypeptide: Lactadherin (409 aa).

2 consecutive EGF-like domains span residues 2-41 (SGDFCDSSLCLNGGTCLLDQDPQKPFHCLCPEGFTGLICN) and 44-88 (EKGP…IHCE). 3 disulfides stabilise this stretch: cysteine 6/cysteine 17, cysteine 11/cysteine 29, and cysteine 31/cysteine 40. An N-linked (GlcNAc...) asparagine glycan is attached at asparagine 41. Intrachain disulfides connect cysteine 48/cysteine 59, cysteine 53/cysteine 76, cysteine 78/cysteine 87, cysteine 91/cysteine 247, cysteine 234/cysteine 238, and cysteine 252/cysteine 409. Residues 67 to 69 (RGD) carry the Cell attachment site motif. F5/8 type C domains are found at residues 91–247 (CNAP…LLGC) and 252–409 (CAEP…LLGC). The N-linked (GlcNAc...) asparagine glycan is linked to asparagine 372.

As to expression, mammary epithelial cell surfaces and spermatozoan. Also present in testis, epididymis, uterus, adrenal gland, tonsil, muscle, heart, lymphatic gland, thymus and kidney but not spleen, liver, lung or brain.

Its subcellular location is the membrane. The protein localises to the secreted. It localises to the cytoplasmic vesicle. The protein resides in the secretory vesicle. It is found in the acrosome membrane. Contributes to phagocytic removal of apoptotic cells in many tissues. Plays an important role in the maintenance of intestinal epithelial homeostasis and the promotion of mucosal healing. Promotes VEGF-dependent neovascularization. Specific ligand for the alpha-v/beta-3 and alpha-v/beta-5 receptors. Also binds to phosphatidylserine-enriched cell surfaces in a receptor-independent manner. Zona pellucida-binding protein which may play a role in gamete interaction. The polypeptide is Lactadherin (MFGE8) (Sus scrofa (Pig)).